We begin with the raw amino-acid sequence, 300 residues long: D-alanine--D-alanine ligase (300 aa).

The 195-residue stretch at 99-293 (KKILKYANIN…FAELLNSIVK (195 aa)) folds into the ATP-grasp domain. 126–181 (IEKIGYPVFVKPNSGGSSVATNLVKDKEGIKEAVELALKYDKEVMIENYTKGEEIT) lines the ATP pocket. Positions 248, 260, and 262 each coordinate Mg(2+).

It belongs to the D-alanine--D-alanine ligase family. Mg(2+) is required as a cofactor. Mn(2+) serves as cofactor.

The protein localises to the cytoplasm. It carries out the reaction 2 D-alanine + ATP = D-alanyl-D-alanine + ADP + phosphate + H(+). It participates in cell wall biogenesis; peptidoglycan biosynthesis. In terms of biological role, cell wall formation. In Clostridium botulinum (strain Okra / Type B1), this protein is D-alanine--D-alanine ligase.